Reading from the N-terminus, the 376-residue chain is Sterol 24-C-methyltransferase (376 aa).

The protein belongs to the class I-like SAM-binding methyltransferase superfamily. Erg6/SMT family.

The enzyme catalyses zymosterol + S-adenosyl-L-methionine = fecosterol + S-adenosyl-L-homocysteine + H(+). It participates in steroid metabolism; ergosterol biosynthesis; ergosterol from zymosterol: step 1/5. Substrate analogs 25-azalanosterol and 24(R,S),25-epiminolanosterol act as inhibitors. Its function is as follows. Sterol 24-C-methyltransferase; part of the third module of ergosterol biosynthesis pathway that includes the late steps of the pathway. ERG6 catalyzes the methyl transfer from S-adenosyl-methionine to the C-24 of zymosterol to form fecosterol. The third module or late pathway involves the ergosterol synthesis itself through consecutive reactions that mainly occur in the endoplasmic reticulum (ER) membrane. Firstly, the squalene synthase ERG9 catalyzes the condensation of 2 farnesyl pyrophosphate moieties to form squalene, which is the precursor of all steroids. Squalene synthase is crucial for balancing the incorporation of farnesyl diphosphate (FPP) into sterol and nonsterol isoprene synthesis. Secondly, the squalene epoxidase ERG1 catalyzes the stereospecific oxidation of squalene to (S)-2,3-epoxysqualene, which is considered to be a rate-limiting enzyme in steroid biosynthesis. Then, the lanosterol synthase ERG7 catalyzes the cyclization of (S)-2,3 oxidosqualene to lanosterol, a reaction that forms the sterol core. In the next steps, lanosterol is transformed to zymosterol through a complex process involving various demethylation, reduction and desaturation reactions. The lanosterol 14-alpha-demethylase ERG11 (also known as CYP51) catalyzes C14-demethylation of lanosterol to produce 4,4'-dimethyl cholesta-8,14,24-triene-3-beta-ol, which is critical for ergosterol biosynthesis. The C-14 reductase ERG24 reduces the C14=C15 double bond of 4,4-dimethyl-cholesta-8,14,24-trienol to produce 4,4-dimethyl-cholesta-8,24-dienol. 4,4-dimethyl-cholesta-8,24-dienol is substrate of the C-4 demethylation complex ERG25-ERG26-ERG27 in which ERG25 catalyzes the three-step monooxygenation required for the demethylation of 4,4-dimethyl and 4alpha-methylsterols, ERG26 catalyzes the oxidative decarboxylation that results in a reduction of the 3-beta-hydroxy group at the C-3 carbon to an oxo group, and ERG27 is responsible for the reduction of the keto group on the C-3. ERG28 has a role as a scaffold to help anchor ERG25, ERG26 and ERG27 to the endoplasmic reticulum and ERG29 regulates the activity of the iron-containing C4-methylsterol oxidase ERG25. Then, the sterol 24-C-methyltransferase ERG6 catalyzes the methyl transfer from S-adenosyl-methionine to the C-24 of zymosterol to form fecosterol. The C-8 sterol isomerase ERG2 catalyzes the reaction which results in unsaturation at C-7 in the B ring of sterols and thus converts fecosterol to episterol. The sterol-C5-desaturase ERG3 then catalyzes the introduction of a C-5 double bond in the B ring to produce 5-dehydroepisterol. The C-22 sterol desaturase ERG5 further converts 5-dehydroepisterol into ergosta-5,7,22,24(28)-tetraen-3beta-ol by forming the C-22(23) double bond in the sterol side chain. Finally, ergosta-5,7,22,24(28)-tetraen-3beta-ol is substrate of the C-24(28) sterol reductase ERG4 to produce ergosterol. The sequence is that of Sterol 24-C-methyltransferase from Candida albicans (strain SC5314 / ATCC MYA-2876) (Yeast).